Reading from the N-terminus, the 44-residue chain is Photosystem I reaction center subunit IX (44 aa).

The chain crosses the membrane as a helical span at residues 7–27 (YLSVAPVVSTLWFAALAGLLI).

Belongs to the PsaJ family.

The protein localises to the plastid. Its subcellular location is the chloroplast thylakoid membrane. May help in the organization of the PsaE and PsaF subunits. The protein is Photosystem I reaction center subunit IX of Lotus japonicus (Lotus corniculatus var. japonicus).